The sequence spans 284 residues: Cysteine-rich repeat secretory protein 8 (284 aa).

An N-terminal signal peptide occupies residues 1 to 27 (MATFIRFTAPLFCFFFLFSLFSHQTMS). Gnk2-homologous domains are found at residues 32–136 (MATF…NVSF) and 151–259 (SLAT…TTGL).

It belongs to the cysteine-rich repeat secretory protein family.

The protein localises to the secreted. The polypeptide is Cysteine-rich repeat secretory protein 8 (CRRSP8) (Arabidopsis thaliana (Mouse-ear cress)).